Consider the following 215-residue polypeptide: 3-isopropylmalate dehydratase small subunit (215 aa).

This sequence belongs to the LeuD family. LeuD type 1 subfamily. Heterodimer of LeuC and LeuD.

The catalysed reaction is (2R,3S)-3-isopropylmalate = (2S)-2-isopropylmalate. The protein operates within amino-acid biosynthesis; L-leucine biosynthesis; L-leucine from 3-methyl-2-oxobutanoate: step 2/4. Functionally, catalyzes the isomerization between 2-isopropylmalate and 3-isopropylmalate, via the formation of 2-isopropylmaleate. The chain is 3-isopropylmalate dehydratase small subunit from Xylella fastidiosa (strain M23).